Consider the following 190-residue polypeptide: Female-specific histamine-binding protein 1 (190 aa).

The first 18 residues, 1-18 (MKLLLSLAFVLALSQVKA), serve as a signal peptide directing secretion. The histamine site is built by tyrosine 54, aspartate 57, tryptophan 60, glutamate 100, tyrosine 118, glutamate 153, and tryptophan 155. Disulfide bonds link cysteine 66–cysteine 187 and cysteine 137–cysteine 166.

This sequence belongs to the calycin superfamily. Histamine-binding salivary protein family. As to quaternary structure, monomer. In terms of tissue distribution, expressed in salivary glands.

The protein resides in the secreted. Salivary tick protein that acts by scavenging histamine at the wound site, outcompeting histamine receptors for histamine, thereby overcoming host inflammatory responses. Binds histamine with a high-affinity (Kd=18 nM). Contains two binding histamine sites (H and L), that appear to bind histamine with differing affinities (high and low). In vivo, when tested on a mouse asthma model, shows a profound inhibitory effect on allergic asthma. Aerosol administration of this protein prevents airway hyperreactivity and abrogates peribronchial inflammation, eosinophil recruitment, mucus hypersecretion, and interleukins (IL-4 and IL-5) secretion. In addition, when tested on a mouse model of acute respiratory distress syndrome (ARDS), it attenuates endotoxin-induced acute lung injury. The chain is Female-specific histamine-binding protein 1 from Rhipicephalus appendiculatus (Brown ear tick).